We begin with the raw amino-acid sequence, 1095 residues long: DNA-directed RNA polymerase subunit beta'' (1095 aa).

4 residues coordinate Zn(2+): Cys220, Cys293, Cys300, and Cys303.

The protein belongs to the RNA polymerase beta' chain family. RpoC2 subfamily. In terms of assembly, in plastids the minimal PEP RNA polymerase catalytic core is composed of four subunits: alpha, beta, beta', and beta''. When a (nuclear-encoded) sigma factor is associated with the core the holoenzyme is formed, which can initiate transcription. Zn(2+) serves as cofactor.

The protein localises to the plastid. The protein resides in the chloroplast. The catalysed reaction is RNA(n) + a ribonucleoside 5'-triphosphate = RNA(n+1) + diphosphate. In terms of biological role, DNA-dependent RNA polymerase catalyzes the transcription of DNA into RNA using the four ribonucleoside triphosphates as substrates. The polypeptide is DNA-directed RNA polymerase subunit beta'' (Zygnema circumcarinatum (Green alga)).